The primary structure comprises 1239 residues: MDPFTQHMLEKAEQRSRALGISNASKFPLVECSVPSSSATSASGGDAGVLAPRSRSPGGQSAASGGGKVVTLGKATLEASPAKPLRHYTAVNKENLDMGIEINITTDKPIGVQVEIQEQEVTDDEEQAEGGALNPLLEAEPVNQPLARLRDTSRSRLQRMGALYSNTDDLSSPIHRTEGQFHVTTGEEEDCGNRSSRQPKQRLGKLAALADTINQWEDDTSHHEVHRLLEAPPPKPHLSSRRAEKGPAPLPPKKDEVDEASRTKQLKWDPKVLSSLEAQGFQRRESSTIKHTYDYAKQEEAAPASKVEDAVLTAKPPVPQKSTTVSQVAKNFASSAPAPKPAPAPAVSVKSGLVSGRAALFENKGTGGQSQGLRNQKDPCELSLKERMKLFETGNNKAMLPMAPIGSAPSITQIRAEEVKQHLAAMHPVTAAAATTVVAATKPKQENKLRDKVAALVANAQSSAETRIKDIDRQRQEDMQIISNRFNKQKELFDNQPSDSSVAAQARPPAPAPSRVVRPMPPPPPPPIAALSPGLASSKRRSPGDAPTTDEDSKRARKSHSDRLYPALSDLDSSGDNCCAAETASATDDSHQQDEEETESCMDESDDQSQTEDSSAGMCNGSLGREIMSAVQRNEVEMQQQQTGKKTVRYADQDMYYDDSSLNSSQVSAGIDDYLDEALVEDYGSTQDDQSDSGDEQNASRLSLGSKGTTASNSFSFRKNPASICTPIEEHHEMEMDLQTPLLSGAQPVKSELSVNQDNDNLVTLVHTVSFYRRQQSANSSNSTPVRKICREQQVMRSALAGDCHAKHRLEYDSPQQSDYVAAATDIADQTDEDDEEMQNAREVNDASQAQDKIKKLLSEVCKQQQVIGQASQALNLCAATVEFSGSTESVEGERYLLLATHRRQACLDEVQRLRVENSIRPVGAPKEKGLLTVKDITIPLRQEYVRKMASNNINGHHLVCLLKYNEHVLATKTVPTMPGLLSVKFPDVLQLNNVYADFRITLEIYGMLAQRDQLPHELKYHINLNKKGGIKTPKKKGGENRLVMPPVQSPAGPHVVRTPQLVQYGFAIFSLREIQRTTWTLTQVLGVSPLEGVVHMKVNCELSVSVEYKGFLTMFEDISGFGAWHRRWCYLNGSVINYWKYPDDEKRKTPMGSIDLNSCTSQKVTTAPRDICARLNTMLLECERPALETDQESLIIVPNGRTTTVRHLLSADTKEEREEWCAYLNKALTLLRAWGTTH.

Disordered stretches follow at residues C32–G67, E230–Q265, F493–G621, and G684–S716. The segment covering R53–A63 has biased composition (low complexity). Residues E126–Q371 form an interaction with and bundling of F-actin region. Basic and acidic residues predominate over residues P252 to Q265. Over residues S500–R518 the composition is skewed to low complexity. Residues P519–I528 are compositionally biased toward pro residues. The span at E551–R563 shows a compositional bias: basic and acidic residues. The segment covering D594–Q610 has biased composition (acidic residues). Positions A699–S716 are enriched in polar residues. A Phosphoserine modification is found at S712. The residue at position 740 (T740) is a Phosphothreonine. Phosphoserine is present on residues S744 and S754. The residue at position 831 (T831) is a Phosphothreonine. Residues D834–V861 adopt a coiled-coil conformation. The PH domain maps to S1106–T1230.

Interacts with and bundles F-actin. In terms of tissue distribution, accumulates in the ring canals that interconnect cells of the germline cysts in males and the ovarian follicles in females. These structures develop from arrested contractile rings after a specialized cytokinesis in which the closing of the invaginating plasma membrane is incomplete. Also concentrates in the arrested cleavage furrows that initially link the oocyte to its 15 nurse cells in the early egg chamber and is subsequently lost from these furrows as germline cell division is completed.

The protein resides in the nucleus. It is found in the cytoplasm. It localises to the cytoskeleton. The protein localises to the cell cortex. Its subcellular location is the cell projection. The protein resides in the cilium. It is found in the flagellum. Its function is as follows. Required for cytokinesis. Essential for the structural integrity of the cleavage furrow and for completion of cleavage furrow ingression and proper formation of the midbody. Required during cellularization of syncytial embryos for the proper formation and function of the furrow canals, the stable inward folds of the plasma membrane which separate the peripheral nuclei. Also required for the formation of the pole cells, the progenitors of the adult germline which are formed by cytokinesis of the cytoplasmic buds at the posterior pole of the syncytial embryo. Essential for embryonic viability. This Drosophila melanogaster (Fruit fly) protein is Anillin (scra).